We begin with the raw amino-acid sequence, 725 residues long: N-alpha-acetyltransferase 35, NatC auxiliary subunit (725 aa).

At Ser-187 the chain carries Phosphoserine. The tract at residues 548 to 573 (ERIMEEQQKGRSSKKTKKKKKVRPLS) is disordered. The segment covering 558–571 (RSSKKTKKKKKVRP) has biased composition (basic residues).

This sequence belongs to the MAK10 family. In terms of assembly, component of the N-terminal acetyltransferase C (NatC) complex, which is composed of NAA35, NAA38 and NAA30.

Its subcellular location is the cytoplasm. Functionally, auxillary component of the N-terminal acetyltransferase C (NatC) complex which catalyzes acetylation of N-terminal methionine residues. N-terminal acetylation protects proteins from ubiquitination and degradation by the N-end rule pathway. Involved in regulation of apoptosis and proliferation of smooth muscle cells. The sequence is that of N-alpha-acetyltransferase 35, NatC auxiliary subunit (NAA35) from Macaca fascicularis (Crab-eating macaque).